The primary structure comprises 281 residues: Release factor glutamine methyltransferase (281 aa).

Positions 141 and 185 each coordinate S-adenosyl-L-methionine. Residue 185 to 188 (NPPY) participates in substrate binding.

Belongs to the protein N5-glutamine methyltransferase family. PrmC subfamily.

It carries out the reaction L-glutaminyl-[peptide chain release factor] + S-adenosyl-L-methionine = N(5)-methyl-L-glutaminyl-[peptide chain release factor] + S-adenosyl-L-homocysteine + H(+). Its function is as follows. Methylates the class 1 translation termination release factors RF1/PrfA and RF2/PrfB on the glutamine residue of the universally conserved GGQ motif. This Mycolicibacterium smegmatis (strain ATCC 700084 / mc(2)155) (Mycobacterium smegmatis) protein is Release factor glutamine methyltransferase.